Reading from the N-terminus, the 567-residue chain is Urease subunit alpha (567 aa).

The 439-residue stretch at 129 to 567 (GGIDSHIHFI…LPLAQRYFLF (439 aa)) folds into the Urease domain. Ni(2+) contacts are provided by histidine 134, histidine 136, and lysine 217. At lysine 217 the chain carries N6-carboxylysine. Histidine 219 serves as a coordination point for substrate. Ni(2+) is bound by residues histidine 246 and histidine 272. Catalysis depends on histidine 320, which acts as the Proton donor. Aspartate 360 provides a ligand contact to Ni(2+).

It belongs to the metallo-dependent hydrolases superfamily. Urease alpha subunit family. As to quaternary structure, heterotrimer of UreA (gamma), UreB (beta) and UreC (alpha) subunits. Three heterotrimers associate to form the active enzyme. It depends on Ni cation as a cofactor. In terms of processing, carboxylation allows a single lysine to coordinate two nickel ions.

The protein resides in the cytoplasm. The enzyme catalyses urea + 2 H2O + H(+) = hydrogencarbonate + 2 NH4(+). The protein operates within nitrogen metabolism; urea degradation; CO(2) and NH(3) from urea (urease route): step 1/1. This is Urease subunit alpha from Pseudomonas entomophila (strain L48).